Here is a 341-residue protein sequence, read N- to C-terminus: Mitochondrial glutathione transporter SLC25A40 (341 aa).

3 Solcar repeats span residues I14–I132, R140–S224, and P234–F328. Transmembrane regions (helical) follow at residues M20–V40, L104–T124, I143–L163, W200–V221, F236–P256, and G299–I319.

Belongs to the mitochondrial carrier (TC 2.A.29) family.

It localises to the mitochondrion inner membrane. It carries out the reaction glutathione(in) = glutathione(out). Probable mitochondrial transporter required for glutathione import into mitochondria. Glutathione, which plays key roles in oxidative metabolism, is produced exclusively in the cytosol and is imported in many organelles. Mitochondrial glutathione is required for the activity and stability of proteins containing iron-sulfur clusters. The polypeptide is Mitochondrial glutathione transporter SLC25A40 (Xenopus tropicalis (Western clawed frog)).